The sequence spans 249 residues: Probable transcriptional regulatory protein MXAN_4974 (249 aa).

This sequence belongs to the TACO1 family.

Its subcellular location is the cytoplasm. In Myxococcus xanthus (strain DK1622), this protein is Probable transcriptional regulatory protein MXAN_4974.